The chain runs to 424 residues: Glutamate-1-semialdehyde 2,1-aminomutase (424 aa).

The residue at position 258 (lysine 258) is an N6-(pyridoxal phosphate)lysine.

Belongs to the class-III pyridoxal-phosphate-dependent aminotransferase family. HemL subfamily. Requires pyridoxal 5'-phosphate as cofactor.

Its subcellular location is the cytoplasm. The catalysed reaction is (S)-4-amino-5-oxopentanoate = 5-aminolevulinate. The protein operates within porphyrin-containing compound metabolism; protoporphyrin-IX biosynthesis; 5-aminolevulinate from L-glutamyl-tRNA(Glu): step 2/2. This Pyrobaculum islandicum (strain DSM 4184 / JCM 9189 / GEO3) protein is Glutamate-1-semialdehyde 2,1-aminomutase.